A 428-amino-acid polypeptide reads, in one-letter code: Adenylosuccinate synthetase (428 aa).

GTP-binding positions include 12–18 (GDEGKGK) and 40–42 (GHT). Catalysis depends on D13, which acts as the Proton acceptor. Positions 13 and 40 each coordinate Mg(2+). IMP is bound by residues 13–16 (DEGK), 38–41 (NAGH), T129, R143, Q224, T239, and R303. The active-site Proton donor is H41. Position 299-305 (299-305 (VTTGRIR)) interacts with substrate. Residues R305, 331 to 333 (KVD), and 410 to 412 (AYG) contribute to the GTP site.

This sequence belongs to the adenylosuccinate synthetase family. Homodimer. It depends on Mg(2+) as a cofactor.

The protein localises to the cytoplasm. The enzyme catalyses IMP + L-aspartate + GTP = N(6)-(1,2-dicarboxyethyl)-AMP + GDP + phosphate + 2 H(+). It functions in the pathway purine metabolism; AMP biosynthesis via de novo pathway; AMP from IMP: step 1/2. In terms of biological role, plays an important role in the de novo pathway of purine nucleotide biosynthesis. Catalyzes the first committed step in the biosynthesis of AMP from IMP. The polypeptide is Adenylosuccinate synthetase (Francisella philomiragia subsp. philomiragia (strain ATCC 25017 / CCUG 19701 / FSC 153 / O#319-036)).